The primary structure comprises 489 residues: Betaine aldehyde dehydrogenase (489 aa).

K(+)-binding residues include Thr-26 and Asp-93. NAD(+) is bound at residue 150–152 (GAW). Lys-162 acts as the Charge relay system in catalysis. 176 to 179 (KPSE) contributes to the NAD(+) binding site. Val-180 is a K(+) binding site. An NAD(+)-binding site is contributed by 229-232 (GVET). Residue Leu-245 participates in K(+) binding. The active-site Proton acceptor is Glu-251. Gly-253, Cys-285, and Glu-386 together coordinate NAD(+). Residue Cys-285 is the Nucleophile of the active site. At Cys-285 the chain carries Cysteine sulfenic acid (-SOH). 2 residues coordinate K(+): Lys-456 and Gly-459. Glu-463 serves as the catalytic Charge relay system.

Belongs to the aldehyde dehydrogenase family. Dimer of dimers. The cofactor is K(+).

The enzyme catalyses betaine aldehyde + NAD(+) + H2O = glycine betaine + NADH + 2 H(+). Its pathway is amine and polyamine biosynthesis; betaine biosynthesis via choline pathway; betaine from betaine aldehyde: step 1/1. Its function is as follows. Involved in the biosynthesis of the osmoprotectant glycine betaine. Catalyzes the irreversible oxidation of betaine aldehyde to the corresponding acid. The polypeptide is Betaine aldehyde dehydrogenase (Burkholderia mallei (strain SAVP1)).